The sequence spans 393 residues: Putative N(4)-(beta-N-acetylglucosaminyl)-L-asparaginase CG1827 (393 aa).

Positions 1-23 (MRRHLRASLWILCLATMAFSILA) are cleaved as a signal peptide. N-linked (GlcNAc...) asparagine glycosylation is found at asparagine 49 and asparagine 64. Disulfide bonds link cysteine 97–cysteine 102 and cysteine 196–cysteine 212. The active-site Nucleophile is the threonine 243. Substrate-binding positions include 271–274 (RVGD) and 294–297 (TGDG). Cysteine 354 and cysteine 381 are joined by a disulfide.

The protein belongs to the Ntn-hydrolase family. In terms of assembly, heterotetramer of two alpha and two beta chains arranged as a dimer of alpha/beta heterodimers. Post-translationally, cleaved into an alpha and beta chain by autocatalysis; this activates the enzyme. The N-terminal residue of the beta subunit is responsible for the nucleophile hydrolase activity.

It catalyses the reaction N(4)-(beta-N-acetyl-D-glucosaminyl)-L-asparagine + H2O = N-acetyl-beta-D-glucosaminylamine + L-aspartate + H(+). In terms of biological role, cleaves the GlcNAc-Asn bond which joins oligosaccharides to the peptide of asparagine-linked glycoproteins. The chain is Putative N(4)-(beta-N-acetylglucosaminyl)-L-asparaginase CG1827 from Drosophila melanogaster (Fruit fly).